The chain runs to 217 residues: Adenylate kinase (217 aa).

An ATP-binding site is contributed by 10 to 15 (GAGKGT). The NMP stretch occupies residues 30-59 (STGDIFRANIKNNTELGAKAKEYMDQGLLV). AMP is bound by residues Thr-31, Arg-36, 57–59 (LLV), 85–88 (GFPR), and Gln-92. Residues 126–163 (GRRACVSCGGTYHVVFTPTKKEGICDACGGELTIRDDD) form an LID region. Arg-127 is an ATP binding site. Zn(2+)-binding residues include Cys-130 and Cys-133. Residue 136-137 (TY) coordinates ATP. Positions 150 and 153 each coordinate Zn(2+). Residues Arg-160 and Arg-171 each coordinate AMP. Lys-199 provides a ligand contact to ATP.

This sequence belongs to the adenylate kinase family. Monomer.

It localises to the cytoplasm. It catalyses the reaction AMP + ATP = 2 ADP. Its pathway is purine metabolism; AMP biosynthesis via salvage pathway; AMP from ADP: step 1/1. Functionally, catalyzes the reversible transfer of the terminal phosphate group between ATP and AMP. Plays an important role in cellular energy homeostasis and in adenine nucleotide metabolism. The protein is Adenylate kinase of Lachnoclostridium phytofermentans (strain ATCC 700394 / DSM 18823 / ISDg) (Clostridium phytofermentans).